Reading from the N-terminus, the 348-residue chain is MKKWSRHLLAAGALALGMSAAHADDNNTLYFYNWTEYVPPGLLEQFTKETGIKVIYSTYESNETMYAKLKTYKDGAYDLVVPSTYYVDKMRKEGMIQKIDKSKLTNFSNLDPDMLNKPFDPNNDYSIPYIWGATAIGVNGDAVDPKSVTSWADLWKPEYKGSLLLTDDAREVFQMALRKLGYSGNTTDPKEIEAAYNELKKLMPNVAAFNSDNPANPYMEGEVNLGMIWNGSAFVARQAGTPIDVVWPKEGGIFWMDSLAIPANAKNKEGALKLINFLLRPDVAKQVAETIGYPTPNLAARKLLSPEVANDKTLYPDAETIKNGEWQNDVGAASSIYEEYYQKLKAGR.

The N-terminal stretch at 1–23 (MKKWSRHLLAAGALALGMSAAHA) is a signal peptide. Spermidine is bound by residues Glu-36, Tyr-85, 168 to 171 (DARE), and Gln-327.

Belongs to the bacterial solute-binding protein PotD/PotF family.

The protein localises to the periplasm. Functionally, required for the activity of the bacterial periplasmic transport system of putrescine and spermidine. Polyamine binding protein. In Escherichia coli (strain K12), this protein is Spermidine/putrescine-binding periplasmic protein (potD).